Here is a 178-residue protein sequence, read N- to C-terminus: Ribosome maturation factor RimP (178 aa).

Belongs to the RimP family.

The protein resides in the cytoplasm. Its function is as follows. Required for maturation of 30S ribosomal subunits. This chain is Ribosome maturation factor RimP, found in Streptococcus pyogenes serotype M3 (strain ATCC BAA-595 / MGAS315).